The following is a 482-amino-acid chain: Pup--protein ligase (482 aa).

Glutamate 16 serves as a coordination point for Mg(2+). Arginine 60 provides a ligand contact to ATP. Position 62 (tyrosine 62) interacts with Mg(2+). Aspartate 64 serves as the catalytic Proton acceptor. Mg(2+) is bound at residue glutamate 70. ATP is bound by residues threonine 73 and tryptophan 440.

This sequence belongs to the Pup ligase/Pup deamidase family. Pup-conjugating enzyme subfamily.

The catalysed reaction is ATP + [prokaryotic ubiquitin-like protein]-L-glutamate + [protein]-L-lysine = ADP + phosphate + N(6)-([prokaryotic ubiquitin-like protein]-gamma-L-glutamyl)-[protein]-L-lysine.. It participates in protein degradation; proteasomal Pup-dependent pathway. It functions in the pathway protein modification; protein pupylation. Functionally, catalyzes the covalent attachment of the prokaryotic ubiquitin-like protein modifier Pup to the proteasomal substrate proteins, thereby targeting them for proteasomal degradation. This tagging system is termed pupylation. The ligation reaction involves the side-chain carboxylate of the C-terminal glutamate of Pup and the side-chain amino group of a substrate lysine. In Corynebacterium glutamicum (strain R), this protein is Pup--protein ligase.